Here is a 620-residue protein sequence, read N- to C-terminus: tRNA uridine 5-carboxymethylaminomethyl modification enzyme MnmG (620 aa).

FAD is bound by residues 13 to 18, V125, and S182; that span reads GGGHAG. 280–294 contacts NAD(+); that stretch reads GPRYCPSVEDKIVKF. N377 provides a ligand contact to FAD.

This sequence belongs to the MnmG family. Homodimer. Heterotetramer of two MnmE and two MnmG subunits. It depends on FAD as a cofactor.

Its subcellular location is the cytoplasm. Its function is as follows. NAD-binding protein involved in the addition of a carboxymethylaminomethyl (cmnm) group at the wobble position (U34) of certain tRNAs, forming tRNA-cmnm(5)s(2)U34. The protein is tRNA uridine 5-carboxymethylaminomethyl modification enzyme MnmG of Sulfurihydrogenibium sp. (strain YO3AOP1).